A 287-amino-acid polypeptide reads, in one-letter code: Prepilin leader peptidase/N-methyltransferase (287 aa).

6 helical membrane-spanning segments follow: residues 10–30 (LGFP…NVVI), 101–121 (ISIQ…ASVW), 125–145 (FGWQ…MSGI), 177–197 (KPAL…WWLF), 226–246 (ILPI…IWLF), and 253–273 (ATPI…FFWG).

This sequence belongs to the peptidase A24 family.

The protein localises to the cell inner membrane. The enzyme catalyses Typically cleaves a -Gly-|-Phe- bond to release an N-terminal, basic peptide of 5-8 residues from type IV prepilin, and then N-methylates the new N-terminal amino group, the methyl donor being S-adenosyl-L-methionine.. Plays an essential role in type IV pili and type II pseudopili formation by proteolytically removing the leader sequence from substrate proteins and subsequently monomethylating the alpha-amino group of the newly exposed N-terminal phenylalanine. The protein is Prepilin leader peptidase/N-methyltransferase (xpsO) of Xanthomonas campestris pv. campestris (strain ATCC 33913 / DSM 3586 / NCPPB 528 / LMG 568 / P 25).